The sequence spans 100 residues: Large ribosomal subunit protein uL23 (100 aa).

This sequence belongs to the universal ribosomal protein uL23 family. Part of the 50S ribosomal subunit. Contacts protein L29, and trigger factor when it is bound to the ribosome.

Functionally, one of the early assembly proteins it binds 23S rRNA. One of the proteins that surrounds the polypeptide exit tunnel on the outside of the ribosome. Forms the main docking site for trigger factor binding to the ribosome. The polypeptide is Large ribosomal subunit protein uL23 (Escherichia coli O157:H7).